A 1161-amino-acid polypeptide reads, in one-letter code: MGLDQEDLDLTNDDHFIDKEKLSAPIKSTADKFQLVPEFLKVRGLVKQHLDSFNYFINVGIHKIVKANSRITSTVDPSIYLRFKKVRVGEPSIINVNTVENINPHMCRLADMTYAAPIFVNIEYVHGSHGNKAKSAKDNVIIGRMPIMLRSCRCVLHGKDEEELARLGECPLDPGGYFIIKGTEKVLLIQEQLSKNRIIIDSDKKGNINASVTSSTEMTKSKTVIQMEKEKIYLFLHRFVKKIPIIIVLKAMGMESDQEIVQMVGRDPRFSASLLPSIEECVSEGVNTQKQALDYLEAKVKKISYGTPPEKDGRALSILRDLFLAHVPVPDNNFRQKCFYVGVMLRRMIEAMLNKDAMDDKDYVGNKRLELSGQLISLLFEDLFKTMLSEAIKNVDHILNKPIRASRFDFSQCLNKDSRYSISLGLERTLSTGNFDIKRFRMHRKGMTQVLTRLSFIGSMGFITKISPQFEKSRKVSGPRSLQPSQWGMLCPCDTPEGESCGLVKNLALMTHVTTDEEEGPLVAMCYKLGVTDLEVLSAEELHTPDSFLVILNGLILGKHSRPQYFANSLRRLRRAGKIGEFVSVFTNEKQHCVYVASDVGRVCRPLVIADKGISRVKQHHMKELQDGVRTFDDFIRDGLIEYLDVNEENNALIALYESDGTTELDEGAEAAKADTTHIEIEPFTILGVVAGLIPYPHHNQSPRNTYQCAMGKQAMGNIAYNQLNRMDTLLYLLVYPQRPLLTTRTIELVGYDKLGAGQNATVAVMSFSGYDIEDAIVMNKSSLDRGFGRCIVMKKIVAMSQKYDNCTADRILIPQRTGPDAEKMQILDDDGLATPGEIIRPNDIYINKQVPVDTVTKFTSALSDSQYRPAREYFKGPEGETQVVDRVALCSDKKGQLCIKYIIRHTRRPELGDKFSSRHGQKGVCGIIIQQEDFPFSELGICPDLIMNPHGFPSRMTVGKMIELLGSKAGVSCGRFHYGSAFGERSGHADKVETISATLVEKGFSYSGKDLLYSGISGEPVEAYIFMGPIYYQKLKHMVLDKMHARGSGPRVMMTRQPTEGKSKNGGLRVGEMERDCLIAYGASMLIYERLMISSDPFEVQVCRACGLLGYYNYKLKKAVCTTCKNGDNIATMKLPYACKLLFQELQSMNVVPRLKLTEA.

The segment at 1104-1125 (CRACGLLGYYNYKLKKAVCTTC) adopts a C4-type zinc-finger fold.

The protein belongs to the RNA polymerase beta chain family. In terms of assembly, component of the RNA polymerase III (Pol III) complex consisting of 17 subunits.

It localises to the nucleus. The enzyme catalyses RNA(n) + a ribonucleoside 5'-triphosphate = RNA(n+1) + diphosphate. DNA-dependent RNA polymerase catalyzes the transcription of DNA into RNA using the four ribonucleoside triphosphates as substrates. Second largest core component of RNA polymerase III which synthesizes small RNAs, such as 5S rRNA and tRNAs. Proposed to contribute to the polymerase catalytic activity and forms the polymerase active center together with the largest subunit. Pol III is composed of mobile elements and NRPC2 is part of the core element with the central large cleft and probably a clamp element that moves to open and close the cleft. Its function is as follows. Essential for the completion of the three rounds of mitosis in female megaspores required for the development of mature gametophytes. This Arabidopsis thaliana (Mouse-ear cress) protein is DNA-directed RNA polymerase III subunit 2.